Consider the following 130-residue polypeptide: ATP synthase epsilon chain (130 aa).

Belongs to the ATPase epsilon chain family. F-type ATPases have 2 components, CF(1) - the catalytic core - and CF(0) - the membrane proton channel. CF(1) has five subunits: alpha(3), beta(3), gamma(1), delta(1), epsilon(1). CF(0) has three main subunits: a, b and c.

It is found in the cell inner membrane. Functionally, produces ATP from ADP in the presence of a proton gradient across the membrane. This chain is ATP synthase epsilon chain, found in Sulfurimonas denitrificans (strain ATCC 33889 / DSM 1251) (Thiomicrospira denitrificans (strain ATCC 33889 / DSM 1251)).